The sequence spans 563 residues: Probable terpene synthase 4 (563 aa).

Residues Asp-316, Asp-320, and Glu-469 each coordinate Mg(2+). Residues 316–320 carry the DDXXD motif motif; the sequence is DDIFD.

The protein belongs to the terpene synthase family. Requires Mg(2+) as cofactor.

In terms of biological role, probable sesquiterpene synthase. In Ricinus communis (Castor bean), this protein is Probable terpene synthase 4 (TPS4).